The following is a 272-amino-acid chain: Glycerol-3-phosphate acyltransferase (272 aa).

6 consecutive transmembrane segments (helical) span residues 9–29, 60–80, 99–119, 149–169, 173–193, and 226–246; these read IIILFLFIGYFIGNILFGILI, AIVMVLDFFKSWFSTFVCLLI, VIIYLGGFAAIIGHCFPCFYF, ASISPWMFFICFVLFWSICLI, VSLASIVTVFLLPIWSLIPHL, and LNWWYILVTFLLELLTAVLVI.

It belongs to the PlsY family. In terms of assembly, probably interacts with PlsX.

Its subcellular location is the cell membrane. The catalysed reaction is an acyl phosphate + sn-glycerol 3-phosphate = a 1-acyl-sn-glycero-3-phosphate + phosphate. The protein operates within lipid metabolism; phospholipid metabolism. In terms of biological role, catalyzes the transfer of an acyl group from acyl-phosphate (acyl-PO(4)) to glycerol-3-phosphate (G3P) to form lysophosphatidic acid (LPA). This enzyme utilizes acyl-phosphate as fatty acyl donor, but not acyl-CoA or acyl-ACP. The protein is Glycerol-3-phosphate acyltransferase of Malacoplasma penetrans (strain HF-2) (Mycoplasma penetrans).